The sequence spans 344 residues: Follistatin (344 aa).

The N-terminal stretch at 1–29 (MARPRHQPGGLCLLLLLLCQFMEDRSAQA) is a signal peptide. One can recognise a TB domain in the interval 30 to 103 (GNCWLRQAKN…TCENVDCGPG (74 aa)). 18 disulfides stabilise this stretch: cysteine 32–cysteine 55, cysteine 42–cysteine 88, cysteine 56–cysteine 91, cysteine 95–cysteine 106, cysteine 100–cysteine 116, cysteine 118–cysteine 150, cysteine 122–cysteine 143, cysteine 132–cysteine 164, cysteine 168–cysteine 179, cysteine 173–cysteine 189, cysteine 192–cysteine 225, cysteine 196–cysteine 218, cysteine 207–cysteine 239, cysteine 245–cysteine 256, cysteine 250–cysteine 267, cysteine 270–cysteine 302, cysteine 274–cysteine 295, and cysteine 284–cysteine 316. The region spanning 94 to 117 (TCENVDCGPGKKCRMNKKNKPRCV) is the Follistatin-like 1 domain. Positions 112–166 (NKPRCVCAPDCSNITWKGLVCGLDGKTYRNECALLKARCKEQPELQVQYQGKCKK) constitute a Kazal-like 1 domain. A glycan (N-linked (GlcNAc...) asparagine) is linked at asparagine 124. A Follistatin-like 2 domain is found at 167–190 (TCRDVFCPGSSTCVVDQTNNAYCV). Residues 186-241 (NAYCVTCNRICPEPTSSEQYLCGNDGVTYPSACHLRKATCLLGRSIGLAYEGKCIK) form the Kazal-like 2 domain. The Follistatin-like 3 domain occupies 244–268 (SCDDIQCTGGKKCLWDFKVGRGRCS). Positions 261 to 318 (KVGRGRCSLCGELCPESKSEEPVCASDNATYASECAMKEAACSSGVLLEVKHSGSCNS) constitute a Kazal-like 3 domain. N-linked (GlcNAc...) asparagine glycosylation occurs at asparagine 288. The disordered stretch occupies residues 316–344 (CNSISEDTEDEEEDEDQDYSFPISSILEW). Residues 321 to 333 (EDTEDEEEDEDQD) show a composition bias toward acidic residues.

As to quaternary structure, monomer.

Its subcellular location is the secreted. Functionally, binds directly to activin and functions as an activin antagonist. Specific inhibitor of the biosynthesis and secretion of pituitary follicle stimulating hormone (FSH). This Bubalus bubalis (Domestic water buffalo) protein is Follistatin.